The primary structure comprises 250 residues: 7-cyano-7-deazaguanine synthase (250 aa).

Position 21-31 (21-31 (FSGGQDSSVCL)) interacts with ATP. 4 residues coordinate Zn(2+): Cys209, Cys224, Cys227, and Cys230.

Belongs to the QueC family. Zn(2+) serves as cofactor.

It catalyses the reaction 7-carboxy-7-deazaguanine + NH4(+) + ATP = 7-cyano-7-deazaguanine + ADP + phosphate + H2O + H(+). Its pathway is purine metabolism; 7-cyano-7-deazaguanine biosynthesis. Functionally, catalyzes the ATP-dependent conversion of 7-carboxy-7-deazaguanine (CDG) to 7-cyano-7-deazaguanine (preQ(0)). The polypeptide is 7-cyano-7-deazaguanine synthase (Caulobacter sp. (strain K31)).